The sequence spans 364 residues: MKTRVGVLYGGKSPEHQVSLSTARAVMNAIDPHKFDVIPIYITPEGQWIKGKRLTGTVEEVKQLQFTSTATAMIPVSLNQVPASGSATESDEETIDVIFPLLHGPNGEDGTVQGLLEMLNLPYVGNGVLASAVGMDKVVMKNLFAQAGLRQAKYVSVTKYEWKKGGEAVYDRIEQELGYPCFVKPANAGSSVGISKCKQRDDLKTAFAEAFKYDRKIIIEESIVGREIEIGVIGNDEPICSVAGEIVPKKEFYDYEAKYEDGQTELIIPANVTEEQYETIKSMAIAAFKALDLSGLARVDFFLAEDGTVYINEVNTMPGFTPYSMFPLLWQHSGVPYSELIERLIALALERHQEKQMITYTFEK.

The ATP-grasp domain maps to 141–346 (KNLFAQAGLR…YSELIERLIA (206 aa)). Residue 174-229 (EQELGYPCFVKPANAGSSVGISKCKQRDDLKTAFAEAFKYDRKIIIEESIVGREIE) participates in ATP binding. Aspartate 300, glutamate 313, and asparagine 315 together coordinate Mg(2+).

It belongs to the D-alanine--D-alanine ligase family. The cofactor is Mg(2+). Requires Mn(2+) as cofactor.

The protein resides in the cytoplasm. It carries out the reaction 2 D-alanine + ATP = D-alanyl-D-alanine + ADP + phosphate + H(+). The protein operates within cell wall biogenesis; peptidoglycan biosynthesis. Its function is as follows. Cell wall formation. The protein is D-alanine--D-alanine ligase of Geobacillus thermodenitrificans (strain NG80-2).